Reading from the N-terminus, the 1271-residue chain is Zinc finger transcription factor Trps1 (1271 aa).

Disordered stretches follow at residues 1-76 and 124-155; these read MVRK…DSAS and SPIK…DMSP. The span at 34–49 shows a compositional bias: polar residues; the sequence is SKEISTDPMQENSEQS. A compositionally biased stretch (basic and acidic residues) spans 54 to 65; that stretch reads HNSDDHSFHDQE. Positions 66–76 are enriched in polar residues; the sequence is PSSSINKDSAS. The C2H2-type 1; atypical zinc-finger motif lies at 217-242; sequence FKCNICGYGYYGNDPTDLIKHFRKYH. Residues 328-353 form a C2H2-type 2; atypical zinc finger; that stretch reads FRCKFCNFTYLAKSATELEQHFLKTH. A disordered region spans residues 353 to 387; the sequence is HPNKMKMSSDSGKPSEKSTNKSSPIPRSCEPGDLG. A C2H2-type 3; atypical zinc finger spans residues 426–451; it reads YWCKFCSFSCESSSNSKLLEHHSKQH. The C2H2-type 4; atypical zinc finger occupies 513–543; sequence YNCQFCDFRYSKSHGPEVILVGPLLRHYQQH. 3 C2H2-type zinc fingers span residues 604–627, 656–679, and 682–705; these read HQCD…ENAH, HSCT…RRVH, and YKCR…NSAH. The tract at residues 843-877 is disordered; the sequence is GVTAGASGEKSGQHTPQYPTAGDSKSKDESQSLLR. The GATA-type zinc finger occupies 886–910; the sequence is CANCLTTKTSLWRKNANGGYVCNAC. Disordered regions lie at residues 938 to 987, 1031 to 1064, and 1154 to 1196; these read RTRK…RENQ, SPQE…YMRP, and LDLA…EKSD. Positions 972–985 are enriched in basic and acidic residues; sequence IRSEDHSMEGHQRE. Over residues 1031–1049 the composition is skewed to low complexity; the sequence is SPQESSGEPGNSSSVSDGK. Composition is skewed to basic and acidic residues over residues 1050–1062 and 1170–1196; these read GSSE…EKYM and DSKE…EKSD. The transcriptional repressor domain stretch occupies residues 1153–1271; the sequence is PLDLAMKHSR…QAEKNGKNKD (119 aa). Glycyl lysine isopeptide (Lys-Gly) (interchain with G-Cter in SUMO) cross-links involve residues lysine 1182 and lysine 1191. 2 consecutive C2H2-type zinc fingers follow at residues 1205 to 1227 and 1233 to 1257; these read TKCV…MSCH and FQCS…RGLH.

As to quaternary structure, binds specifically to GATA sequences. Post-translationally, sumoylated. Sumoylation in the repressor domain inhibits the transcription repression activity. Sumoylation on Lys-1191 is the major site. Appears to be sumoylated on multiple sites.

The protein resides in the nucleus. In terms of biological role, transcriptional repressor. Represses expression of GATA-regulated genes at selected sites and stages in vertebrate development. The polypeptide is Zinc finger transcription factor Trps1 (trps1) (Xenopus laevis (African clawed frog)).